We begin with the raw amino-acid sequence, 373 residues long: Citrate synthase (373 aa).

Residues histidine 262 and aspartate 314 contribute to the active site.

Belongs to the citrate synthase family. As to quaternary structure, homohexamer.

It carries out the reaction oxaloacetate + acetyl-CoA + H2O = citrate + CoA + H(+). It functions in the pathway carbohydrate metabolism; tricarboxylic acid cycle; isocitrate from oxaloacetate: step 1/2. This Heyndrickxia coagulans (Weizmannia coagulans) protein is Citrate synthase (ctsA).